We begin with the raw amino-acid sequence, 159 residues long: Ribonuclease H (159 aa).

The RNase H type-1 domain occupies 10-153; it reads TQTQVVIYTD…ADALANQGVE (144 aa). Mg(2+) is bound by residues Asp-19, Glu-57, Asp-79, and Asp-145.

Belongs to the RNase H family. Monomer. The cofactor is Mg(2+).

The protein resides in the cytoplasm. The enzyme catalyses Endonucleolytic cleavage to 5'-phosphomonoester.. Functionally, endonuclease that specifically degrades the RNA of RNA-DNA hybrids. This Polaromonas sp. (strain JS666 / ATCC BAA-500) protein is Ribonuclease H.